Consider the following 245-residue polypeptide: Ubiquinone/menaquinone biosynthesis C-methyltransferase UbiE (245 aa).

Residues Thr71, Asp92, and 118–119 (DA) contribute to the S-adenosyl-L-methionine site.

Belongs to the class I-like SAM-binding methyltransferase superfamily. MenG/UbiE family.

The enzyme catalyses a 2-demethylmenaquinol + S-adenosyl-L-methionine = a menaquinol + S-adenosyl-L-homocysteine + H(+). The catalysed reaction is a 2-methoxy-6-(all-trans-polyprenyl)benzene-1,4-diol + S-adenosyl-L-methionine = a 5-methoxy-2-methyl-3-(all-trans-polyprenyl)benzene-1,4-diol + S-adenosyl-L-homocysteine + H(+). It functions in the pathway quinol/quinone metabolism; menaquinone biosynthesis; menaquinol from 1,4-dihydroxy-2-naphthoate: step 2/2. Its pathway is cofactor biosynthesis; ubiquinone biosynthesis. Methyltransferase required for the conversion of demethylmenaquinol (DMKH2) to menaquinol (MKH2) and the conversion of 2-polyprenyl-6-methoxy-1,4-benzoquinol (DDMQH2) to 2-polyprenyl-3-methyl-6-methoxy-1,4-benzoquinol (DMQH2). The protein is Ubiquinone/menaquinone biosynthesis C-methyltransferase UbiE of Neisseria gonorrhoeae (strain ATCC 700825 / FA 1090).